The chain runs to 517 residues: G-protein coupled receptor Mth (517 aa).

The N-terminal stretch at 1–27 (MKLFWVKRLLRISTVVVTLLLLQRTNA) is a signal peptide. Residues 28 to 221 (AIPDCDYYDT…CLISPSRMGQ (194 aa)) lie on the Extracellular side of the membrane. 5 disulfides stabilise this stretch: C32–C86, C88–C93, C97–C191, C98–C109, and C153–C212. Residues N48 and N61 are each glycosylated (N-linked (GlcNAc...) asparagine). Residues N126, N173, and N201 are each glycosylated (N-linked (GlcNAc...) asparagine). Residues 222–242 (TVVMITSLVCMVLTITVYLFV) form a helical membrane-spanning segment. The Cytoplasmic segment spans residues 243–251 (KKLQNLHGK). Residues 252-272 (CFMCYMVCLFMAYLLLLLNLW) traverse the membrane as a helical segment. The Extracellular portion of the chain corresponds to 273–279 (QMSQNFC). Residues 280-300 (ITAGFLGYFFVMAAFLWLSVI) traverse the membrane as a helical segment. Residues 301–323 (SLHLWNTFSGSAHNANRFLSEHR) are Cytoplasmic-facing. The chain crosses the membrane as a helical span at residues 324–344 (FLAYNTYAWGMAVVLTGITYL). At 345–373 (ADKVVENEDWNPRMGFGGHCWICTQSWSA) the chain is on the extracellular side. A helical transmembrane segment spans residues 374 to 394 (MLYFYGPMVFLIAFNITMFIL). The Cytoplasmic segment spans residues 395 to 427 (TANRIIGVKKDIQKFAHRQERKQKLNSDKQTYT). A helical membrane pass occupies residues 428 to 448 (FFLRLFIIMGLTWSLEIGSYI). Residues 449–457 (SQFNQTWSN) lie on the Extracellular side of the membrane. A glycan (N-linked (GlcNAc...) asparagine) is linked at N452. A helical transmembrane segment spans residues 458 to 478 (VFLVADYLNWSQGIIIFILFV). Topologically, residues 479-517 (LKRSTLRLLMESIRGEGEEVNDSEEEISLENTKYDRNVL) are cytoplasmic.

Belongs to the G-protein coupled receptor 2 family. Mth subfamily. As to quaternary structure, homodimer.

The protein localises to the cell membrane. Involved in biological aging and stress response. Essential for adult survival. This Drosophila yakuba (Fruit fly) protein is G-protein coupled receptor Mth (mth).